A 396-amino-acid polypeptide reads, in one-letter code: Elongation factor Tu (396 aa).

In terms of domain architecture, tr-type G spans 10–205; that stretch reads KPHVNIGTIG…ACDDNIPDPV (196 aa). The interval 19 to 26 is G1; the sequence is GHVDHGKT. Position 19–26 (19–26) interacts with GTP; sequence GHVDHGKT. Thr26 provides a ligand contact to Mg(2+). Positions 62-66 are G2; sequence GITIN. The G3 stretch occupies residues 83–86; sequence DAPG. GTP-binding positions include 83-87 and 138-141; these read DAPGH and NKCD. The segment at 138 to 141 is G4; sequence NKCD. The tract at residues 175–177 is G5; it reads SAL.

It belongs to the TRAFAC class translation factor GTPase superfamily. Classic translation factor GTPase family. EF-Tu/EF-1A subfamily. As to quaternary structure, monomer.

It localises to the cytoplasm. The enzyme catalyses GTP + H2O = GDP + phosphate + H(+). GTP hydrolase that promotes the GTP-dependent binding of aminoacyl-tRNA to the A-site of ribosomes during protein biosynthesis. This is Elongation factor Tu from Corynebacterium glutamicum (strain ATCC 13032 / DSM 20300 / JCM 1318 / BCRC 11384 / CCUG 27702 / LMG 3730 / NBRC 12168 / NCIMB 10025 / NRRL B-2784 / 534).